A 1241-amino-acid chain; its full sequence is Dinoflagellate luciferase (1241 aa).

3 luciferase regions span residues 114–465 (KTGL…IKRD), 491–842 (DQGF…TKRD), and 868–1218 (EKGF…KKRD).

The protein belongs to the calycin superfamily. Luciferase family.

The protein resides in the cytoplasmic vesicle. It catalyses the reaction dinoflagellate luciferin + O2 = oxidized dinoflagellate luciferin + hnu + H2O + H(+). Regulated by pH: upon acidification, at a pH of 6.3, dinoflagellate luciferin is released from luciferin-binding protein LBP, allowing the interaction between Dinoflagellate luciferase and its substrate luciferin. Its function is as follows. Emits blue light flashes with a wavelength of 475 nm during the night phase. This Lingulodinium polyedra (Dinoflagellate) protein is Dinoflagellate luciferase.